We begin with the raw amino-acid sequence, 366 residues long: Fe-S cluster assembly protein DRE2 (366 aa).

An N-terminal SAM-like domain region spans residues 8–167; that stretch reads AQGSGRFLLL…KPDFGAQQAV (160 aa). The tract at residues 100 to 136 is disordered; that stretch reads RNRDNQIWGSGSDSAAGLGSSDGGGGGGGGEKKSSSE. The span at 108–118 shows a compositional bias: low complexity; it reads GSGSDSAAGLG. Residues 119-128 are compositionally biased toward gly residues; the sequence is SSDGGGGGGG. Residues 168 to 258 are linker; it reads PLKLGRKKNL…EEELLGEFDM (91 aa). [2Fe-2S] cluster is bound by residues cysteine 268, cysteine 279, cysteine 282, and cysteine 284. The segment at 268 to 284 is fe-S binding site A; sequence CRPKAGKRRRACKDCTC. 4 residues coordinate [4Fe-4S] cluster: cysteine 329, cysteine 332, cysteine 340, and cysteine 343. 2 short sequence motifs (cx2C motif) span residues 329–332 and 340–343; these read CGNC and CDGC. The segment at 329 to 343 is fe-S binding site B; the sequence is CGNCALGDAFRCDGC.

Belongs to the anamorsin family. Monomer. Interacts with TAH18. Interacts with MIA40. It depends on [2Fe-2S] cluster as a cofactor. [4Fe-4S] cluster is required as a cofactor.

The protein localises to the cytoplasm. The protein resides in the mitochondrion intermembrane space. Component of the cytosolic iron-sulfur (Fe-S) protein assembly (CIA) machinery required for the maturation of extramitochondrial Fe-S proteins. Part of an electron transfer chain functioning in an early step of cytosolic Fe-S biogenesis, facilitating the de novo assembly of a [4Fe-4S] cluster on the scaffold complex CFD1-NBP35. Electrons are transferred to DRE2 from NADPH via the FAD- and FMN-containing protein TAH18. TAH18-DRE2 are also required for the assembly of the diferric tyrosyl radical cofactor of ribonucleotide reductase (RNR), probably by providing electrons for reduction during radical cofactor maturation in the catalytic small subunit RNR2. The sequence is that of Fe-S cluster assembly protein DRE2 from Paracoccidioides lutzii (strain ATCC MYA-826 / Pb01) (Paracoccidioides brasiliensis).